We begin with the raw amino-acid sequence, 482 residues long: UDP-N-acetylmuramate--L-alanine ligase (482 aa).

An ATP-binding site is contributed by Gly123–Thr129.

It belongs to the MurCDEF family.

The protein localises to the cytoplasm. The catalysed reaction is UDP-N-acetyl-alpha-D-muramate + L-alanine + ATP = UDP-N-acetyl-alpha-D-muramoyl-L-alanine + ADP + phosphate + H(+). It functions in the pathway cell wall biogenesis; peptidoglycan biosynthesis. In terms of biological role, cell wall formation. The polypeptide is UDP-N-acetylmuramate--L-alanine ligase (Pseudomonas putida (strain ATCC 700007 / DSM 6899 / JCM 31910 / BCRC 17059 / LMG 24140 / F1)).